The chain runs to 485 residues: Cholesterol 16,22-dihydroxylase CYP90G4 (485 aa).

Residues 4 to 24 (VVILFFLFPTLLVLVVAVLGL) form a helical membrane-spanning segment. Cys432 provides a ligand contact to heme.

The protein belongs to the cytochrome P450 family. In terms of tissue distribution, mainly expressed in leaves and, at low levels, in roots and stems.

It localises to the membrane. The enzyme catalyses cholesterol + 2 reduced [NADPH--hemoprotein reductase] + 2 O2 = (16S,22S)-dihydroxycholesterol + 2 oxidized [NADPH--hemoprotein reductase] + 2 H2O + 2 H(+). It functions in the pathway steroid metabolism; cholesterol metabolism. Its function is as follows. Involved in the biosynthesis of spiroketal steroid and saponin natural products from cholesterol such as diosgenin and analogs (e.g. furostanol and spirostanol), plant defense compounds used as main precursors for the industrial production of steroid hormones. During the 5,6-spiroketalization of cholesterol, catalyzes the hydroxylation of cholesterol to form 16S,22S-dihydroxycholesterol and, possibly, the subsequent conversion of 16S,22S-dihydroxycholesterol into 16-oxo-22-hydroxy-cholesterol and 16-hydroxy-22-oxo-cholesterol. 16-hydroxy-22-oxo-cholesterol submit a spontaneous reaction leading to the production of furostanol-type steroid diastereomers, precursors of diosgenin. The polypeptide is Cholesterol 16,22-dihydroxylase CYP90G4 (Paris polyphylla (Daiswa polyphylla)).